Reading from the N-terminus, the 468-residue chain is 6-phospho-beta-galactosidase (468 aa).

D-galactose 6-phosphate-binding residues include Q19, H116, N159, E160, and N297. Residue E160 is the Proton donor of the active site. E375 serves as the catalytic Nucleophile. D-galactose 6-phosphate is bound by residues S428, W429, K435, and Y437.

The protein belongs to the glycosyl hydrolase 1 family.

The enzyme catalyses a 6-phospho-beta-D-galactoside + H2O = D-galactose 6-phosphate + an alcohol. Its pathway is carbohydrate metabolism; lactose degradation; D-galactose 6-phosphate and beta-D-glucose from lactose 6-phosphate: step 1/1. The polypeptide is 6-phospho-beta-galactosidase (Streptococcus pyogenes serotype M1).